The primary structure comprises 457 residues: UPF0210 protein Sfum_2948 (457 aa).

This sequence belongs to the UPF0210 family. In terms of assembly, homodimer.

This chain is UPF0210 protein Sfum_2948, found in Syntrophobacter fumaroxidans (strain DSM 10017 / MPOB).